The chain runs to 266 residues: Non-structural maintenance of chromosomes element 1 homolog (266 aa).

The segment at 1–102 (MQGSTRRMSV…SISKMATDFA (102 aa)) is interaction with NSMCE3. The RING-type; atypical zinc finger occupies 191–232 (CNICHSLLIQGQSCETCGIRMHLPCVAKYFQSNAEPRCPHCN). The interval 245-266 (PEKERESGVSKSNKKSLRSRQH) is disordered. Position 251 is a phosphoserine (Ser-251). The span at 256-266 (SNKKSLRSRQH) shows a compositional bias: basic residues.

It belongs to the NSE1 family. Component of the SMC5-SMC6 complex which consists at least of SMC5, SMC6, NSMCE2, NSMCE1, NSMCE4A or EID3 and NSMCE3. NSMCE1, NSMCE4A or EID3 and NSMCE3 probably form a subcomplex that bridges the head domains of the SMC5-SMC6 heterodimer. Interacts with NSMCE3. In terms of processing, ubiquitinated.

It is found in the nucleus. The protein localises to the chromosome. The protein resides in the telomere. It catalyses the reaction S-ubiquitinyl-[E2 ubiquitin-conjugating enzyme]-L-cysteine + [acceptor protein]-L-lysine = [E2 ubiquitin-conjugating enzyme]-L-cysteine + N(6)-ubiquitinyl-[acceptor protein]-L-lysine.. RING-type zinc finger-containing E3 ubiquitin ligase that assembles with melanoma antigen protein (MAGE) to catalyze the direct transfer of ubiquitin from E2 ubiquitin-conjugating enzyme to a specific substrate. Within MAGE-RING ubiquitin ligase complex, MAGE stimulates and specifies ubiquitin ligase activity likely through recruitment and/or stabilization of the E2 ubiquitin-conjugating enzyme at the E3:substrate complex. Involved in maintenance of genome integrity, DNA damage response and DNA repair. NSMCE3/MAGEG1 and NSMCE1 ubiquitin ligase are components of SMC5-SMC6 complex and may positively regulate homologous recombination-mediated DNA repair. The sequence is that of Non-structural maintenance of chromosomes element 1 homolog (NSMCE1) from Pongo abelii (Sumatran orangutan).